Reading from the N-terminus, the 100-residue chain is MAKVTREEVEHIANLARLQITEDETTEMQNTLESILNFANQIDTADTSEIEPTYHVLDLQNVLREDKAIEGIPQELALKNAKVTEDGQFKVPSIMNEEDA.

This sequence belongs to the GatC family. Heterotrimer of A, B and C subunits.

It carries out the reaction L-glutamyl-tRNA(Gln) + L-glutamine + ATP + H2O = L-glutaminyl-tRNA(Gln) + L-glutamate + ADP + phosphate + H(+). The enzyme catalyses L-aspartyl-tRNA(Asn) + L-glutamine + ATP + H2O = L-asparaginyl-tRNA(Asn) + L-glutamate + ADP + phosphate + 2 H(+). Functionally, allows the formation of correctly charged Asn-tRNA(Asn) or Gln-tRNA(Gln) through the transamidation of misacylated Asp-tRNA(Asn) or Glu-tRNA(Gln) in organisms which lack either or both of asparaginyl-tRNA or glutaminyl-tRNA synthetases. The reaction takes place in the presence of glutamine and ATP through an activated phospho-Asp-tRNA(Asn) or phospho-Glu-tRNA(Gln). The polypeptide is Aspartyl/glutamyl-tRNA(Asn/Gln) amidotransferase subunit C (Staphylococcus saprophyticus subsp. saprophyticus (strain ATCC 15305 / DSM 20229 / NCIMB 8711 / NCTC 7292 / S-41)).